The chain runs to 112 residues: Protein GAST1 (112 aa).

A signal peptide spans 1-25; it reads MAGKMSIVLFVLLVVFLTQNQVSRA.

The protein belongs to the GASA family. Six disulfide bonds may be present. In terms of tissue distribution, all shoot organs.

The protein localises to the secreted. The protein is Protein GAST1 (GAST1) of Solanum lycopersicum (Tomato).